The primary structure comprises 445 residues: Trigger factor (445 aa).

Positions 163-248 constitute a PPIase FKBP-type domain; that stretch reads GDTVVIDYVG…IHEVKVKELP (86 aa). Positions 425-445 are disordered; it reads KEVESAKDDADKEASDAKADK.

This sequence belongs to the FKBP-type PPIase family. Tig subfamily.

Its subcellular location is the cytoplasm. The enzyme catalyses [protein]-peptidylproline (omega=180) = [protein]-peptidylproline (omega=0). Involved in protein export. Acts as a chaperone by maintaining the newly synthesized protein in an open conformation. Functions as a peptidyl-prolyl cis-trans isomerase. This Lacticaseibacillus casei (strain BL23) (Lactobacillus casei) protein is Trigger factor.